A 125-amino-acid chain; its full sequence is Basic leucine zipper transcriptional factor ATF-like (125 aa).

A compositionally biased stretch (low complexity) spans 1–14 (MPHSSDSSDSSFSR). The segment at 1–58 (MPHSSDSSDSSFSRSPPPGKQDSSDDVRRVQRREKNRIAAQKSRQRQTQKADTLHLES) is disordered. The 64-residue stretch at 26–89 (DVRRVQRREK…KYFTSVLNSH (64 aa)) folds into the bZIP domain. The basic motif stretch occupies residues 28–50 (RRVQRREKNRIAAQKSRQRQTQK). Position 43 is a phosphoserine (Ser-43). Thr-48 bears the Phosphothreonine mark. Residues 54–75 (LHLESEDLEKQNAALRKEIKQL) are leucine-zipper.

The protein belongs to the bZIP family. Heterodimer; mainly heterodimerizes with JUNB. The BATF-JUNB heterodimer interacts with IRF4 and IRF8. Interacts (via bZIP domain) with IRF4 and IRF8; the interaction is direct. Also forms heterodimers with JUN and JUND. Also interacts with IFI35. Post-translationally, phosphorylated on serine and threonine residues and at least one tyrosine residue. Phosphorylation at Ser-43 inhibit DNA binding activity and transforms it as a negative regulator of AP-1 mediated transcription. Phosphorylated. As to expression, expressed at highest levels in lung, and at lower levels in placenta, liver, kidney, spleen, and peripheral blood. Detected in SW480 colorectal cancer cell line and several hematopoietic tumor cell lines, including Raji Burkitt's lymphoma. Strongly expressed in mature B- and T-lymphocytes. Also expressed in moderate levels in lymph node and appendix and at low levels in thymus and bone marrow.

The protein resides in the nucleus. It is found in the cytoplasm. Functionally, AP-1 family transcription factor that controls the differentiation of lineage-specific cells in the immune system: specifically mediates the differentiation of T-helper 17 cells (Th17), follicular T-helper cells (TfH), CD8(+) dendritic cells and class-switch recombination (CSR) in B-cells. Acts via the formation of a heterodimer with JUNB that recognizes and binds DNA sequence 5'-TGA[CG]TCA-3'. The BATF-JUNB heterodimer also forms a complex with IRF4 (or IRF8) in immune cells, leading to recognition of AICE sequence (5'-TGAnTCA/GAAA-3'), an immune-specific regulatory element, followed by cooperative binding of BATF and IRF4 (or IRF8) and activation of genes. Controls differentiation of T-helper cells producing interleukin-17 (Th17 cells) by binding to Th17-associated gene promoters: regulates expression of the transcription factor RORC itself and RORC target genes such as IL17 (IL17A or IL17B). Also involved in differentiation of follicular T-helper cells (TfH) by directing expression of BCL6 and MAF. In B-cells, involved in class-switch recombination (CSR) by controlling the expression of both AICDA and of germline transcripts of the intervening heavy-chain region and constant heavy-chain region (I(H)-C(H)). Following infection, can participate in CD8(+) dendritic cell differentiation via interaction with IRF4 and IRF8 to mediate cooperative gene activation. Regulates effector CD8(+) T-cell differentiation by regulating expression of SIRT1. Following DNA damage, part of a differentiation checkpoint that limits self-renewal of hematopoietic stem cells (HSCs): up-regulated by STAT3, leading to differentiation of HSCs, thereby restricting self-renewal of HSCs. The sequence is that of Basic leucine zipper transcriptional factor ATF-like (BATF) from Homo sapiens (Human).